Reading from the N-terminus, the 483-residue chain is Galactose-3-O-sulfotransferase 4 (483 aa).

At 1–18 (MGVLSPTRTMRLWGPRSL) the chain is on the cytoplasmic side. Residues 19–39 (GVALGVFMTIGFALQLLGGPF) traverse the membrane as a helical; Signal-anchor for type II membrane protein segment. Residues 40-483 (QRRLPGLQLR…PLKTSRRPSP (444 aa)) lie on the Lumenal side of the membrane. Residues 225–248 (KRGNPHVSRDPNPPQLPSGAGPPA) form a disordered region. Residue Asn371 is glycosylated (N-linked (GlcNAc...) asparagine).

It belongs to the galactose-3-O-sulfotransferase family. It depends on Mn(2+) as a cofactor.

Its subcellular location is the golgi apparatus. The protein resides in the golgi stack membrane. It functions in the pathway protein modification; carbohydrate sulfation. Its function is as follows. Catalyzes the transfer of sulfate to beta-1,3-linked galactose residues in O-linked glycoproteins. Good substrates include asialofetuin, Gal-beta-1,3-GalNAc and Gal-beta-1,3 (GlcNAc-beta-1,6)GalNAc. In Bos taurus (Bovine), this protein is Galactose-3-O-sulfotransferase 4 (GAL3ST4).